Here is a 474-residue protein sequence, read N- to C-terminus: MAKEISSELLNTILTRVGGPGNIASCGNCMTRLRLGVHDSSLVDPNIKTLEGVKGVILTSDQVQVVFGPGKAHRAAKAMSELLGDAPVQDAAEIAAQNKRQLKAKQTSGVQQFLAKFATIFTPLIPGFIAAGLLLGIATLIATVMHVPADAQGTLPDALNFMKVFSKGLFTFLVILVGYNAAQAFGGTGVNGAIIAALFLLGYNPAATTGYYAGFHDFFGLPIDPRGNIIGVLIAAWACARIEGMVRRFMPDDLDMLLTSLITLLITATLAYLIIMPLGGWLFEGMSWLFMHLNSNPFGCAVLAGLFLIAVVFGVHQGFIPVYLALMDSQGFNSLFPILSMAGAGQVGAALALYWRAQPHSALRSQVRGAIIPGLLGVGEPLIYGVTLPRMKPFVTACLGGAAGGLFIGLIAWWGLPMGLNSAFGPSGLVALPLMTSAQGILPAMAVYAGGILVAWVCGFIFTTLFGCRNVNLD.

The region spanning 1-89 (MAKEISSELL…SELLGDAPVQ (89 aa)) is the PTS EIIB type-1 domain. The Cytoplasmic portion of the chain corresponds to 1 to 123 (MAKEISSELL…LAKFATIFTP (123 aa)). Cys-29 functions as the Phosphocysteine intermediate; for EIIB activity in the catalytic mechanism. The 360-residue stretch at 115–474 (AKFATIFTPL…LFGCRNVNLD (360 aa)) folds into the PTS EIIC type-1 domain. Residues 124 to 144 (LIPGFIAAGLLLGIATLIATV) traverse the membrane as a helical segment. The Periplasmic portion of the chain corresponds to 145–157 (MHVPADAQGTLPD). A helical transmembrane segment spans residues 158–178 (ALNFMKVFSKGLFTFLVILVG). The Cytoplasmic portion of the chain corresponds to 179–180 (YN). A helical transmembrane segment spans residues 181–201 (AAQAFGGTGVNGAIIAALFLL). Over 202–217 (GYNPAATTGYYAGFHD) the chain is Periplasmic. Residues 218–238 (FFGLPIDPRGNIIGVLIAAWA) form a helical membrane-spanning segment. Topologically, residues 239–260 (CARIEGMVRRFMPDDLDMLLTS) are cytoplasmic. The chain crosses the membrane as a helical span at residues 261-281 (LITLLITATLAYLIIMPLGGW). The Periplasmic portion of the chain corresponds to 282–301 (LFEGMSWLFMHLNSNPFGCA). A helical transmembrane segment spans residues 302-322 (VLAGLFLIAVVFGVHQGFIPV). At 323–334 (YLALMDSQGFNS) the chain is on the cytoplasmic side. Residues 335–355 (LFPILSMAGAGQVGAALALYW) traverse the membrane as a helical segment. Residues 356–368 (RAQPHSALRSQVR) are Periplasmic-facing. Residues 369 to 389 (GAIIPGLLGVGEPLIYGVTLP) form a helical membrane-spanning segment. The Cytoplasmic segment spans residues 390–393 (RMKP). Residues 394-414 (FVTACLGGAAGGLFIGLIAWW) traverse the membrane as a helical segment. Residues 415-440 (GLPMGLNSAFGPSGLVALPLMTSAQG) lie on the Periplasmic side of the membrane. Residues 441–461 (ILPAMAVYAGGILVAWVCGFI) traverse the membrane as a helical segment. Residues 462-474 (FTTLFGCRNVNLD) lie on the Cytoplasmic side of the membrane.

Its subcellular location is the cell inner membrane. The enzyme catalyses N-acetyl-beta-D-muramate(out) + N(pros)-phospho-L-histidyl-[protein] = N-acetyl-beta-D-muramate 6-phosphate(in) + L-histidyl-[protein]. The phosphoenolpyruvate-dependent sugar phosphotransferase system (sugar PTS), a major carbohydrate active transport system, catalyzes the phosphorylation of incoming sugar substrates concomitantly with their translocation across the cell membrane. This system is involved in N-acetylmuramic acid (MurNAc) transport, yielding cytoplasmic MurNAc-6-P. Is also able to take up anhydro-N-acetylmuramic acid (anhMurNAc), but cannot phosphorylate the carbon 6, probably because of the 1,6-anhydro ring. This chain is PTS system N-acetylmuramic acid-specific EIIBC component (murP), found in Shigella flexneri.